The primary structure comprises 563 residues: MDTKTLIASEIAKVVPELEQDAIFNLLETPKNSDMGDLAFPAFSLAKVLRKAPQMIASELAEQIDESQFEKVVAVGPYINFFLDKAKISSQVLEQVITAGSDYAQQDEGQGRNVAIDMSSPNIAKPFSIGHLRSTVIGDSLAHIFAKMGYKPVKINHLGDWGKQFGMLIVAYKKWGDEAAVQAHPIDELLKLYVRINAEAETDPTVDEEAREWFRKLEDGDKEATELWQWFRDESLLEFNRLYDQLHVTFDSYNGEAFYNDKMDEVLDLLEAKNLLVESKGAQVVNLEKYGIEHPALIKKSDGATLYITRDLAAALYRKRTYDFAKSVYVVGNEQAAHFKQLKAVLKEMGYDWSDDMTHVAFGLVTKGGAKLSTRKGNVILLEPTVAEAINRAASQIEAKNPNLADKEAVAHAVGVGAIKFYDLKTDRMNGYDFDLEAMVSFEGETGPYVQYAHARIQSILRKADFTPSATTTYSLADAESWEIIKLIQDFPRIIKRTSDNFEPSIMAKFAINLAQSFNKYYAHTRILDDNSERDNRLALCYATATVLKEALRLLSVDAPNEM.

Residues 121 to 131 (PNIAKPFSIGH) carry the 'HIGH' region motif.

This sequence belongs to the class-I aminoacyl-tRNA synthetase family. Monomer.

It is found in the cytoplasm. The enzyme catalyses tRNA(Arg) + L-arginine + ATP = L-arginyl-tRNA(Arg) + AMP + diphosphate. The protein is Arginine--tRNA ligase of Streptococcus pyogenes serotype M12 (strain MGAS2096).